A 161-amino-acid polypeptide reads, in one-letter code: Large ribosomal subunit protein uL11 (161 aa).

This sequence belongs to the universal ribosomal protein uL11 family. Part of the ribosomal stalk of the 50S ribosomal subunit. Interacts with L10 and the large rRNA to form the base of the stalk. L10 forms an elongated spine to which L12 dimers bind in a sequential fashion forming a multimeric L10(L12)X complex.

In terms of biological role, forms part of the ribosomal stalk which helps the ribosome interact with GTP-bound translation factors. This is Large ribosomal subunit protein uL11 from Methanocaldococcus jannaschii (strain ATCC 43067 / DSM 2661 / JAL-1 / JCM 10045 / NBRC 100440) (Methanococcus jannaschii).